Reading from the N-terminus, the 402-residue chain is Phosphoglycerate kinase (402 aa).

Substrate is bound by residues 24-26 (DLN), arginine 39, 62-65 (HLGR), arginine 121, and arginine 161. Residues lysine 211, glycine 299, glutamate 330, and 359 to 362 (GGDS) each bind ATP.

Belongs to the phosphoglycerate kinase family. In terms of assembly, monomer.

The protein resides in the cytoplasm. It carries out the reaction (2R)-3-phosphoglycerate + ATP = (2R)-3-phospho-glyceroyl phosphate + ADP. The protein operates within carbohydrate degradation; glycolysis; pyruvate from D-glyceraldehyde 3-phosphate: step 2/5. The polypeptide is Phosphoglycerate kinase (Corynebacterium urealyticum (strain ATCC 43042 / DSM 7109)).